Here is a 333-residue protein sequence, read N- to C-terminus: Leucine carboxyl methyltransferase 1 (333 aa).

S-adenosyl-L-methionine is bound by residues lysine 42, arginine 82, glycine 107, aspartate 131, 181-182 (DL), and glutamate 208.

It belongs to the methyltransferase superfamily. LCMT family.

The catalysed reaction is [phosphatase 2A protein]-C-terminal L-leucine + S-adenosyl-L-methionine = [phosphatase 2A protein]-C-terminal L-leucine methyl ester + S-adenosyl-L-homocysteine. Functionally, methylates the carboxyl group of the C-terminal leucine residue of protein phosphatase 2A catalytic subunits to form alpha-leucine ester residues. This Caenorhabditis elegans protein is Leucine carboxyl methyltransferase 1.